We begin with the raw amino-acid sequence, 178 residues long: Adenine phosphoribosyltransferase (178 aa).

It belongs to the purine/pyrimidine phosphoribosyltransferase family. As to quaternary structure, homodimer.

The protein localises to the cytoplasm. It catalyses the reaction AMP + diphosphate = 5-phospho-alpha-D-ribose 1-diphosphate + adenine. It participates in purine metabolism; AMP biosynthesis via salvage pathway; AMP from adenine: step 1/1. Its function is as follows. Catalyzes a salvage reaction resulting in the formation of AMP, that is energically less costly than de novo synthesis. This Novosphingobium aromaticivorans (strain ATCC 700278 / DSM 12444 / CCUG 56034 / CIP 105152 / NBRC 16084 / F199) protein is Adenine phosphoribosyltransferase.